We begin with the raw amino-acid sequence, 95 residues long: Aspartyl/glutamyl-tRNA(Asn/Gln) amidotransferase subunit C (95 aa).

This sequence belongs to the GatC family. Heterotrimer of A, B and C subunits.

It catalyses the reaction L-glutamyl-tRNA(Gln) + L-glutamine + ATP + H2O = L-glutaminyl-tRNA(Gln) + L-glutamate + ADP + phosphate + H(+). It carries out the reaction L-aspartyl-tRNA(Asn) + L-glutamine + ATP + H2O = L-asparaginyl-tRNA(Asn) + L-glutamate + ADP + phosphate + 2 H(+). Its function is as follows. Allows the formation of correctly charged Asn-tRNA(Asn) or Gln-tRNA(Gln) through the transamidation of misacylated Asp-tRNA(Asn) or Glu-tRNA(Gln) in organisms which lack either or both of asparaginyl-tRNA or glutaminyl-tRNA synthetases. The reaction takes place in the presence of glutamine and ATP through an activated phospho-Asp-tRNA(Asn) or phospho-Glu-tRNA(Gln). This Marinobacter nauticus (strain ATCC 700491 / DSM 11845 / VT8) (Marinobacter aquaeolei) protein is Aspartyl/glutamyl-tRNA(Asn/Gln) amidotransferase subunit C.